Consider the following 702-residue polypeptide: Methionine--tRNA ligase (702 aa).

A 'HIGH' region motif is present at residues 14-24 (PYANGPVHLGH). Residues Cys-146, Cys-149, Cys-159, and Cys-162 each contribute to the Zn(2+) site. The 'KMSKS' region motif lies at 344–348 (KFSKS). Residue Lys-347 participates in ATP binding. The tRNA-binding domain maps to 601-702 (EFLKVDLRVA…GKEINGKKIQ (102 aa)).

It belongs to the class-I aminoacyl-tRNA synthetase family. MetG type 1 subfamily. As to quaternary structure, homodimer. The cofactor is Zn(2+).

It localises to the cytoplasm. It carries out the reaction tRNA(Met) + L-methionine + ATP = L-methionyl-tRNA(Met) + AMP + diphosphate. Its function is as follows. Is required not only for elongation of protein synthesis but also for the initiation of all mRNA translation through initiator tRNA(fMet) aminoacylation. The chain is Methionine--tRNA ligase from Chlorobium phaeobacteroides (strain DSM 266 / SMG 266 / 2430).